Here is a 211-residue protein sequence, read N- to C-terminus: Protein-L-isoaspartate O-methyltransferase (211 aa).

Serine 60 is a catalytic residue.

Belongs to the methyltransferase superfamily. L-isoaspartyl/D-aspartyl protein methyltransferase family.

It localises to the cytoplasm. The enzyme catalyses [protein]-L-isoaspartate + S-adenosyl-L-methionine = [protein]-L-isoaspartate alpha-methyl ester + S-adenosyl-L-homocysteine. Its function is as follows. Catalyzes the methyl esterification of L-isoaspartyl residues in peptides and proteins that result from spontaneous decomposition of normal L-aspartyl and L-asparaginyl residues. It plays a role in the repair and/or degradation of damaged proteins. The polypeptide is Protein-L-isoaspartate O-methyltransferase (Pseudomonas syringae pv. tomato (strain ATCC BAA-871 / DC3000)).